Here is a 38-residue protein sequence, read N- to C-terminus: Photosystem II reaction center protein L (38 aa).

Residues 17–37 (SLYWGLLLIFVLAILFSNYFF) form a helical membrane-spanning segment.

The protein belongs to the PsbL family. In terms of assembly, PSII is composed of 1 copy each of membrane proteins PsbA, PsbB, PsbC, PsbD, PsbE, PsbF, PsbH, PsbI, PsbJ, PsbK, PsbL, PsbM, PsbT, PsbX, PsbY, PsbZ, Psb30/Ycf12, at least 3 peripheral proteins of the oxygen-evolving complex and a large number of cofactors. It forms dimeric complexes.

It is found in the plastid. Its subcellular location is the chloroplast thylakoid membrane. One of the components of the core complex of photosystem II (PSII). PSII is a light-driven water:plastoquinone oxidoreductase that uses light energy to abstract electrons from H(2)O, generating O(2) and a proton gradient subsequently used for ATP formation. It consists of a core antenna complex that captures photons, and an electron transfer chain that converts photonic excitation into a charge separation. This subunit is found at the monomer-monomer interface and is required for correct PSII assembly and/or dimerization. The protein is Photosystem II reaction center protein L of Aethionema cordifolium (Lebanon stonecress).